Reading from the N-terminus, the 115-residue chain is NADH-ubiquinone oxidoreductase chain 3 (115 aa).

3 consecutive transmembrane segments (helical) span residues 4–24 (LMVMLVNITLSSCLIMIAFWL), 55–75 (FFLVAITFFLFDLEIALLLPL), and 87–107 (MMLTAFILVSVLALGLAYEWM).

The protein belongs to the complex I subunit 3 family. In terms of assembly, core subunit of respiratory chain NADH dehydrogenase (Complex I) which is composed of 45 different subunits. Interacts with TMEM186. Interacts with TMEM242.

The protein localises to the mitochondrion inner membrane. It carries out the reaction a ubiquinone + NADH + 5 H(+)(in) = a ubiquinol + NAD(+) + 4 H(+)(out). Core subunit of the mitochondrial membrane respiratory chain NADH dehydrogenase (Complex I) which catalyzes electron transfer from NADH through the respiratory chain, using ubiquinone as an electron acceptor. Essential for the catalytic activity of complex I. In Peromyscus mexicanus (Mexican deer mouse), this protein is NADH-ubiquinone oxidoreductase chain 3.